Here is a 388-residue protein sequence, read N- to C-terminus: Putative O-antigen polymerase (388 aa).

The next 9 membrane-spanning stretches (helical) occupy residues 23 to 43 (IFYPAVCVNIIFALVLLGYEI), 57 to 77 (LIFLLCNVLTFTLSCLLTESV), 97 to 117 (VHNVGLLVISFSMIYICMRLS), 143 to 163 (NFSAYMQPIILTTFALFIWSK), 180 to 200 (IVFIFAIILNTGKQIVFMVII), 215 to 235 (VYLITAVGVLFSLYMLFLRGL), 312 to 332 (ISAELSYLMMVIHGCISGVLW), 338 to 358 (YISVKIFYSYFIYTFSFIFYH), and 361 to 381 (FMTNISSWIQITLCIIVFSQF).

The protein resides in the cell inner membrane. Its function is as follows. May function in vitro as a polymerase that catalyzes the polymerization of the O-antigen repeat units on the periplasmic face of the inner membrane, leading to the formation of the lipid-linked O-antigen molecule. However, E.coli K12 strains do not normally produce the O-antigen in vivo due to mutations in the rfb gene cluster. K12 strains are phenotypically rough, their lipopolysaccharide having a complete core structure, but no O-antigen. In Escherichia coli (strain K12), this protein is Putative O-antigen polymerase.